A 193-amino-acid chain; its full sequence is Pyridoxal 5'-phosphate synthase subunit PdxT (193 aa).

Residue 52–54 coordinates L-glutamine; it reads GES. Cysteine 84 functions as the Nucleophile in the catalytic mechanism. L-glutamine-binding positions include arginine 111 and 139–140; that span reads IR. Residues histidine 176 and glutamate 178 each act as charge relay system in the active site.

Belongs to the glutaminase PdxT/SNO family. In terms of assembly, in the presence of PdxS, forms a dodecamer of heterodimers. Only shows activity in the heterodimer.

The enzyme catalyses aldehydo-D-ribose 5-phosphate + D-glyceraldehyde 3-phosphate + L-glutamine = pyridoxal 5'-phosphate + L-glutamate + phosphate + 3 H2O + H(+). The catalysed reaction is L-glutamine + H2O = L-glutamate + NH4(+). Its pathway is cofactor biosynthesis; pyridoxal 5'-phosphate biosynthesis. Functionally, catalyzes the hydrolysis of glutamine to glutamate and ammonia as part of the biosynthesis of pyridoxal 5'-phosphate. The resulting ammonia molecule is channeled to the active site of PdxS. The polypeptide is Pyridoxal 5'-phosphate synthase subunit PdxT (Pasteurella multocida (strain Pm70)).